Consider the following 425-residue polypeptide: Serine--tRNA ligase (425 aa).

L-serine is bound at residue 230-232; it reads TAE. 261-263 contacts ATP; it reads RSE. E284 provides a ligand contact to L-serine. 348–351 lines the ATP pocket; it reads EISS. Residue S384 coordinates L-serine.

It belongs to the class-II aminoacyl-tRNA synthetase family. Type-1 seryl-tRNA synthetase subfamily. In terms of assembly, homodimer. The tRNA molecule binds across the dimer.

The protein localises to the cytoplasm. It carries out the reaction tRNA(Ser) + L-serine + ATP = L-seryl-tRNA(Ser) + AMP + diphosphate + H(+). The catalysed reaction is tRNA(Sec) + L-serine + ATP = L-seryl-tRNA(Sec) + AMP + diphosphate + H(+). Its pathway is aminoacyl-tRNA biosynthesis; selenocysteinyl-tRNA(Sec) biosynthesis; L-seryl-tRNA(Sec) from L-serine and tRNA(Sec): step 1/1. In terms of biological role, catalyzes the attachment of serine to tRNA(Ser). Is also able to aminoacylate tRNA(Sec) with serine, to form the misacylated tRNA L-seryl-tRNA(Sec), which will be further converted into selenocysteinyl-tRNA(Sec). This Nitratidesulfovibrio vulgaris (strain DSM 19637 / Miyazaki F) (Desulfovibrio vulgaris) protein is Serine--tRNA ligase.